The sequence spans 158 residues: Cytochrome c-type biogenesis protein CcmE (158 aa).

Over residues 1–11 the composition is skewed to polar residues; sequence MTRPDSGSSPA. The disordered stretch occupies residues 1–20; the sequence is MTRPDSGSSPAPLSEARRRK. The Cytoplasmic segment spans residues 1 to 23; it reads MTRPDSGSSPAPLSEARRRKRNP. Residues 24–44 traverse the membrane as a helical; Signal-anchor for type II membrane protein segment; that stretch reads LPTVLGITALLGLAGFIAFGN. Topologically, residues 45-158 are extracellular; it reads LNKSLEYFVT…ELRDLLEQSE (114 aa). Residues His-137 and Tyr-141 each coordinate heme.

It belongs to the CcmE/CycJ family.

The protein localises to the cell membrane. Functionally, heme chaperone required for the biogenesis of c-type cytochromes. Transiently binds heme delivered by CcmC and transfers the heme to apo-cytochromes in a process facilitated by CcmF and CcmH. The protein is Cytochrome c-type biogenesis protein CcmE of Deinococcus deserti (strain DSM 17065 / CIP 109153 / LMG 22923 / VCD115).